The sequence spans 402 residues: Sulfate adenylyltransferase (402 aa).

Belongs to the sulfate adenylyltransferase family.

It carries out the reaction sulfate + ATP + H(+) = adenosine 5'-phosphosulfate + diphosphate. The protein operates within sulfur metabolism; hydrogen sulfide biosynthesis; sulfite from sulfate: step 1/3. The chain is Sulfate adenylyltransferase from Ruthia magnifica subsp. Calyptogena magnifica.